The chain runs to 249 residues: Probable transcriptional regulatory protein Tfu_2096 (249 aa).

The protein belongs to the TACO1 family.

It is found in the cytoplasm. This chain is Probable transcriptional regulatory protein Tfu_2096, found in Thermobifida fusca (strain YX).